The primary structure comprises 227 residues: Uracil phosphoribosyltransferase (227 aa).

GTP is bound at residue lysine 36 to lysine 40. Residues arginine 86, arginine 111, and aspartate 145–threonine 153 contribute to the 5-phospho-alpha-D-ribose 1-diphosphate site. Uracil contacts are provided by residues isoleucine 212 and glycine 217–alanine 219. Aspartate 218 is a 5-phospho-alpha-D-ribose 1-diphosphate binding site.

Belongs to the UPRTase family. Mg(2+) serves as cofactor.

The enzyme catalyses UMP + diphosphate = 5-phospho-alpha-D-ribose 1-diphosphate + uracil. It participates in pyrimidine metabolism; UMP biosynthesis via salvage pathway; UMP from uracil: step 1/1. Allosterically activated by GTP. Catalyzes the conversion of uracil and 5-phospho-alpha-D-ribose 1-diphosphate (PRPP) to UMP and diphosphate. The protein is Uracil phosphoribosyltransferase of Halobacterium salinarum (strain ATCC 700922 / JCM 11081 / NRC-1) (Halobacterium halobium).